A 398-amino-acid polypeptide reads, in one-letter code: Phosphoglycerate kinase (398 aa).

Substrate-binding positions include 21 to 23 (DFN), Arg36, 59 to 62 (HLGR), Arg119, and Arg157. ATP contacts are provided by residues Lys208, Gly296, Glu327, and 354–357 (GGDS).

The protein belongs to the phosphoglycerate kinase family. Monomer.

The protein resides in the cytoplasm. The catalysed reaction is (2R)-3-phosphoglycerate + ATP = (2R)-3-phospho-glyceroyl phosphate + ADP. It participates in carbohydrate degradation; glycolysis; pyruvate from D-glyceraldehyde 3-phosphate: step 2/5. This chain is Phosphoglycerate kinase, found in Streptococcus sanguinis (strain SK36).